A 282-amino-acid chain; its full sequence is Pantothenate synthetase (282 aa).

30 to 37 (MGNLHDGH) contributes to the ATP binding site. H37 serves as the catalytic Proton donor. Q61 is a binding site for (R)-pantoate. Q61 contributes to the beta-alanine binding site. 149-152 (GEKD) is an ATP binding site. Q155 contacts (R)-pantoate. 186 to 189 (MSSR) is a binding site for ATP.

The protein belongs to the pantothenate synthetase family. As to quaternary structure, homodimer.

Its subcellular location is the cytoplasm. The enzyme catalyses (R)-pantoate + beta-alanine + ATP = (R)-pantothenate + AMP + diphosphate + H(+). It functions in the pathway cofactor biosynthesis; (R)-pantothenate biosynthesis; (R)-pantothenate from (R)-pantoate and beta-alanine: step 1/1. In terms of biological role, catalyzes the condensation of pantoate with beta-alanine in an ATP-dependent reaction via a pantoyl-adenylate intermediate. This is Pantothenate synthetase from Alteromonas mediterranea (strain DSM 17117 / CIP 110805 / LMG 28347 / Deep ecotype).